A 325-amino-acid chain; its full sequence is Tagatose 1,6-diphosphate aldolase 1 (325 aa).

It belongs to the aldolase LacD family.

It carries out the reaction D-tagatofuranose 1,6-bisphosphate = D-glyceraldehyde 3-phosphate + dihydroxyacetone phosphate. The protein operates within carbohydrate metabolism; D-tagatose 6-phosphate degradation; D-glyceraldehyde 3-phosphate and glycerone phosphate from D-tagatose 6-phosphate: step 2/2. The chain is Tagatose 1,6-diphosphate aldolase 1 (lacD1) from Streptococcus mutans serotype c (strain ATCC 700610 / UA159).